The primary structure comprises 491 residues: Glutamyl-tRNA(Gln) amidotransferase subunit A (491 aa).

Active-site charge relay system residues include Lys80 and Ser155. The Acyl-ester intermediate role is filled by Ser179.

The protein belongs to the amidase family. GatA subfamily. As to quaternary structure, heterotrimer of A, B and C subunits.

The catalysed reaction is L-glutamyl-tRNA(Gln) + L-glutamine + ATP + H2O = L-glutaminyl-tRNA(Gln) + L-glutamate + ADP + phosphate + H(+). Allows the formation of correctly charged Gln-tRNA(Gln) through the transamidation of misacylated Glu-tRNA(Gln) in organisms which lack glutaminyl-tRNA synthetase. The reaction takes place in the presence of glutamine and ATP through an activated gamma-phospho-Glu-tRNA(Gln). This chain is Glutamyl-tRNA(Gln) amidotransferase subunit A, found in Salinispora tropica (strain ATCC BAA-916 / DSM 44818 / JCM 13857 / NBRC 105044 / CNB-440).